Here is a 500-residue protein sequence, read N- to C-terminus: Trehalose-6-phosphate synthase (500 aa).

Residue Arg28 coordinates D-glucose 6-phosphate. 48-49 lines the UDP-alpha-D-glucose pocket; it reads GG. Positions 108 and 162 each coordinate D-glucose 6-phosphate. 2 residues coordinate UDP-alpha-D-glucose: Arg304 and Lys309. Arg342 contacts D-glucose 6-phosphate. 407 to 411 is a UDP-alpha-D-glucose binding site; it reads LVAKE.

The protein belongs to the glycosyltransferase 20 family. Homotetramer.

The catalysed reaction is ADP-alpha-D-glucose + D-glucose 6-phosphate = alpha,alpha-trehalose 6-phosphate + ADP + H(+). The enzyme catalyses CDP-alpha-D-glucose + D-glucose 6-phosphate = alpha,alpha-trehalose 6-phosphate + CDP + H(+). It catalyses the reaction GDP-alpha-D-glucose + D-glucose 6-phosphate = alpha,alpha-trehalose 6-phosphate + GDP + H(+). It carries out the reaction TDP-alpha-D-glucose + D-glucose 6-phosphate = 5-methyl-UDP + alpha,alpha-trehalose 6-phosphate + H(+). The catalysed reaction is D-glucose 6-phosphate + UDP-alpha-D-glucose = alpha,alpha-trehalose 6-phosphate + UDP + H(+). Its pathway is glycan biosynthesis; trehalose biosynthesis. Functionally, probably involved in the osmoprotection via the biosynthesis of trehalose and in the production of glycogen and alpha-glucan via the TreS-Pep2 branch involved in the biosynthesis of maltose-1-phosphate (M1P). Catalyzes the transfer of glucose from UDP-glucose (UDP-Glc) to D-glucose 6-phosphate (Glc-6-P) to form trehalose-6-phosphate. Probably also able to use ADP-Glc, CDP-Glc, GDP-Glc and TDP-Glc as glucosyl donors. This chain is Trehalose-6-phosphate synthase, found in Mycobacterium tuberculosis (strain CDC 1551 / Oshkosh).